The following is a 191-amino-acid chain: Phosphoheptose isomerase (191 aa).

The region spanning 37-191 (IAESFKQDGK…IIQLIEKEME (155 aa)) is the SIS domain. 52–54 (NGG) is a substrate binding site. 2 residues coordinate Zn(2+): His-61 and Glu-65. Residues Glu-65, 93–94 (ND), 119–121 (STS), Ser-124, and Gln-172 each bind substrate. Zn(2+) is bound by residues Gln-172 and His-180.

Belongs to the SIS family. GmhA subfamily. As to quaternary structure, homotetramer. It depends on Zn(2+) as a cofactor.

Its subcellular location is the cytoplasm. The catalysed reaction is 2 D-sedoheptulose 7-phosphate = D-glycero-alpha-D-manno-heptose 7-phosphate + D-glycero-beta-D-manno-heptose 7-phosphate. It participates in carbohydrate biosynthesis; D-glycero-D-manno-heptose 7-phosphate biosynthesis; D-glycero-alpha-D-manno-heptose 7-phosphate and D-glycero-beta-D-manno-heptose 7-phosphate from sedoheptulose 7-phosphate: step 1/1. The protein operates within bacterial outer membrane biogenesis; LPS core biosynthesis. Functionally, catalyzes the isomerization of sedoheptulose 7-phosphate in D-glycero-D-manno-heptose 7-phosphate. The protein is Phosphoheptose isomerase of Vibrio vulnificus (strain CMCP6).